We begin with the raw amino-acid sequence, 519 residues long: Chloroethene reductive dehalogenase (519 aa).

Residues Met-1–Ser-43 constitute a signal peptide (tat-type signal). 2 4Fe-4S ferredoxin-type domains span residues Pro-388–Glu-420 and Leu-435–Ala-465. 8 residues coordinate [4Fe-4S] cluster: Cys-400, Cys-403, Cys-406, Cys-410, Cys-444, Cys-448, Cys-451, and Cys-455.

The protein belongs to the PceA family. [4Fe-4S] cluster serves as cofactor. Requires corrinoid as cofactor. Post-translationally, predicted to be exported by the Tat system. The position of the signal peptide cleavage has been experimentally proven.

The protein localises to the cell membrane. The enzyme catalyses chloroethene + AH2 = ethene + chloride + A + H(+). It catalyses the reaction (Z)-1,2-dichloroethene + AH2 = chloroethene + chloride + A + H(+). The catalysed reaction is 1,1-dichloroethene + AH2 = chloroethene + chloride + A + H(+). Catalyzes the reductive dechlorination of chloroethene (or vinyl chloride, VC) to ethene. Can also reduce all dichloroethene (DCE) isomers, but not tetrachloroethene (PCE) or trichloroethene (TCE), at high rates. Reduced methyl viologen can act as the artificial electron donor. The protein is Chloroethene reductive dehalogenase of Dehalococcoides mccartyi (strain VS).